The following is a 331-amino-acid chain: Gem-associated protein 2 (331 aa).

Disordered stretches follow at residues 1–23 (MDEF…NEPL), 101–130 (SNRP…LIPQ), and 151–222 (NNNN…TKKP). Acidic residues predominate over residues 11–21 (VGEEIEPDDNE). Residues 106–126 (NNNNNNNNNNNNNNNNNNNNN) are compositionally biased toward low complexity. Positions 165–215 (DNQEDDDDDENNEDYEYNENKEEEEEEEEEEEEEEEVEEEEEEEEEEEEVV) are enriched in acidic residues. Positions 173–224 (DENNEDYEYNENKEEEEEEEEEEEEEEEVEEEEEEEEEEEEVVDYSTKKPTL) form a coiled coil.

This sequence belongs to the gemin-2 family.

It is found in the nucleus. The protein localises to the gem. It localises to the cytoplasm. The SMN complex catalyzes the assembly of small nuclear ribonucleoproteins (snRNPs), the building blocks of the spliceosome, and thereby plays an important role in the splicing of cellular pre-mRNAs. Most spliceosomal snRNPs contain a common set of Sm proteins SNRPB, SNRPD1, SNRPD2, SNRPD3, SNRPE, SNRPF and SNRPG that assemble in a heptameric protein ring on the Sm site of the small nuclear RNA to form the core snRNP (Sm core). In the cytosol, the Sm proteins SNRPD1, SNRPD2, SNRPE, SNRPF and SNRPG (5Sm) are trapped in an inactive 6S pICln-Sm complex by the chaperone CLNS1A that controls the assembly of the core snRNP. To assemble core snRNPs, the SMN complex accepts the trapped 5Sm proteins from CLNS1A. Binding of snRNA inside 5Sm ultimately triggers eviction of the SMN complex, thereby allowing binding of SNRPD3 and SNRPB to complete assembly of the core snRNP. Within the SMN complex, GEMIN2 constrains the conformation of 5Sm, thereby promoting 5Sm binding to snRNA containing the snRNP code (a nonameric Sm site and a 3'-adjacent stem-loop), thus preventing progression of assembly until a cognate substrate is bound. Its function is as follows. May play an essential role in spliceosomal snRNP assembly in the cytoplasm and may be required for pre-mRNA splicing in the nucleus. The sequence is that of Gem-associated protein 2 (gemin2) from Dictyostelium discoideum (Social amoeba).